The following is a 90-amino-acid chain: Small ribosomal subunit protein uS15 (90 aa).

Belongs to the universal ribosomal protein uS15 family. In terms of assembly, part of the 30S ribosomal subunit. Forms a bridge to the 50S subunit in the 70S ribosome, contacting the 23S rRNA.

One of the primary rRNA binding proteins, it binds directly to 16S rRNA where it helps nucleate assembly of the platform of the 30S subunit by binding and bridging several RNA helices of the 16S rRNA. In terms of biological role, forms an intersubunit bridge (bridge B4) with the 23S rRNA of the 50S subunit in the ribosome. This Campylobacter jejuni subsp. jejuni serotype O:6 (strain 81116 / NCTC 11828) protein is Small ribosomal subunit protein uS15.